The sequence spans 368 residues: Zinc finger protein 24 (368 aa).

A Glycyl lysine isopeptide (Lys-Gly) (interchain with G-Cter in SUMO2) cross-link involves residue Lys22. Lys27 participates in a covalent cross-link: Glycyl lysine isopeptide (Lys-Gly) (interchain with G-Cter in SUMO1); alternate. A Glycyl lysine isopeptide (Lys-Gly) (interchain with G-Cter in SUMO2); alternate cross-link involves residue Lys27. The 83-residue stretch at 52–134 (RQRFRQFGYQ…TVLEDLESEL (83 aa)) folds into the SCAN box domain. Phosphoserine occurs at positions 132 and 142. Glycyl lysine isopeptide (Lys-Gly) (interchain with G-Cter in SUMO2) cross-links involve residues Lys147, Lys177, and Lys236. The C2H2-type 1 zinc-finger motif lies at 251 to 273 (HICDECGKHFSQGSALILHQRIH). Residues 251-301 (HICDECGKHFSQGSALILHQRIHSGEKPYGCVECGKAFSRSSILVQHQRVH) form a necessary and sufficient for nuclear localization region. A Phosphoserine modification is found at Ser274. Residues Lys277 and Lys286 each participate in a glycyl lysine isopeptide (Lys-Gly) (interchain with G-Cter in SUMO2) cross-link. 3 consecutive C2H2-type zinc fingers follow at residues 279 to 301 (YGCV…QRVH), 307 to 329 (YKCL…QRIH), and 335 to 357 (YECV…QRRH). Residue Ser292 is modified to Phosphoserine. At Tyr335 the chain carries Phosphotyrosine. Glycyl lysine isopeptide (Lys-Gly) (interchain with G-Cter in SUMO2) cross-links involve residues Lys361 and Lys367.

The protein belongs to the krueppel C2H2-type zinc-finger protein family. Post-translationally, sumoylated.

Its subcellular location is the nucleus. Functionally, transcription factor required for myelination of differentiated oligodendrocytes. Required for the conversion of oligodendrocytes from the premyelinating to the myelinating state. In the developing central nervous system (CNS), involved in the maintenance in the progenitor stage by promoting the cell cycle. Specifically binds to the 5'-TCAT-3' DNA sequence. Has transcription repressor activity in vitro. This chain is Zinc finger protein 24 (Znf24), found in Rattus norvegicus (Rat).